A 247-amino-acid polypeptide reads, in one-letter code: ATP synthase delta chain, chloroplastic (247 aa).

The transit peptide at 1-60 (MAALRLASFTLRPAAAAAASASSGATPAAPRSASFARAARGLPSLRLAPPRRRGDLVRPR) directs the protein to the chloroplast.

It belongs to the ATPase delta chain family. As to quaternary structure, F-type ATPases have 2 components, CF(1) - the catalytic core - and CF(0) - the membrane proton channel. CF(1) has five subunits: alpha(3), beta(3), gamma(1), delta(1), epsilon(1). CF(0) has three main subunits: a, b and c.

Its subcellular location is the plastid. It is found in the chloroplast thylakoid membrane. In terms of biological role, this protein seems to be part of the stalk that links CF(0) to CF(1). It either transmits conformational changes from CF(0) into CF(1) or is implicated in proton conduction. The chain is ATP synthase delta chain, chloroplastic (ATPD) from Sorghum bicolor (Sorghum).